Here is a 159-residue protein sequence, read N- to C-terminus: 2-C-methyl-D-erythritol 2,4-cyclodiphosphate synthase (159 aa).

D8 and H10 together coordinate a divalent metal cation. 4-CDP-2-C-methyl-D-erythritol 2-phosphate is bound by residues 8 to 10 (DVH) and 34 to 35 (HS). H42 contacts a divalent metal cation. Residues 56–58 (DIG), 61–65 (FPDTD), 100–106 (AQAPRML), 132–135 (TTTE), F139, and R142 each bind 4-CDP-2-C-methyl-D-erythritol 2-phosphate.

This sequence belongs to the IspF family. As to quaternary structure, homotrimer. A divalent metal cation is required as a cofactor.

The enzyme catalyses 4-CDP-2-C-methyl-D-erythritol 2-phosphate = 2-C-methyl-D-erythritol 2,4-cyclic diphosphate + CMP. The protein operates within isoprenoid biosynthesis; isopentenyl diphosphate biosynthesis via DXP pathway; isopentenyl diphosphate from 1-deoxy-D-xylulose 5-phosphate: step 4/6. Its function is as follows. Involved in the biosynthesis of isopentenyl diphosphate (IPP) and dimethylallyl diphosphate (DMAPP), two major building blocks of isoprenoid compounds. Catalyzes the conversion of 4-diphosphocytidyl-2-C-methyl-D-erythritol 2-phosphate (CDP-ME2P) to 2-C-methyl-D-erythritol 2,4-cyclodiphosphate (ME-CPP) with a corresponding release of cytidine 5-monophosphate (CMP). The protein is 2-C-methyl-D-erythritol 2,4-cyclodiphosphate synthase of Escherichia coli O6:K15:H31 (strain 536 / UPEC).